Here is a 151-residue protein sequence, read N- to C-terminus: Large ribosomal subunit protein bL17 (151 aa).

It belongs to the bacterial ribosomal protein bL17 family. In terms of assembly, part of the 50S ribosomal subunit. Contacts protein L32.

The polypeptide is Large ribosomal subunit protein bL17 (Chlorobium limicola (strain DSM 245 / NBRC 103803 / 6330)).